The following is a 221-amino-acid chain: Phosphoglycolate phosphatase (221 aa).

Aspartate 10 acts as the Nucleophile in catalysis. Mg(2+)-binding residues include aspartate 10, aspartate 12, and aspartate 168.

It belongs to the HAD-like hydrolase superfamily. CbbY/CbbZ/Gph/YieH family. The cofactor is Mg(2+).

The catalysed reaction is 2-phosphoglycolate + H2O = glycolate + phosphate. Its pathway is organic acid metabolism; glycolate biosynthesis; glycolate from 2-phosphoglycolate: step 1/1. Functionally, specifically catalyzes the dephosphorylation of 2-phosphoglycolate. Is involved in the dissimilation of the intracellular 2-phosphoglycolate formed during the DNA repair of 3'-phosphoglycolate ends, a major class of DNA lesions induced by oxidative stress. The protein is Phosphoglycolate phosphatase of Xanthomonas campestris pv. campestris (strain 8004).